We begin with the raw amino-acid sequence, 210 residues long: N-(5'-phosphoribosyl)anthranilate isomerase (210 aa).

This sequence belongs to the TrpF family.

It carries out the reaction N-(5-phospho-beta-D-ribosyl)anthranilate = 1-(2-carboxyphenylamino)-1-deoxy-D-ribulose 5-phosphate. It participates in amino-acid biosynthesis; L-tryptophan biosynthesis; L-tryptophan from chorismate: step 3/5. This is N-(5'-phosphoribosyl)anthranilate isomerase from Pseudomonas fluorescens (strain SBW25).